Reading from the N-terminus, the 229-residue chain is Large ribosomal subunit protein uL1 (229 aa).

This sequence belongs to the universal ribosomal protein uL1 family. As to quaternary structure, part of the 50S ribosomal subunit.

Functionally, binds directly to 23S rRNA. The L1 stalk is quite mobile in the ribosome, and is involved in E site tRNA release. Its function is as follows. Protein L1 is also a translational repressor protein, it controls the translation of the L11 operon by binding to its mRNA. This is Large ribosomal subunit protein uL1 from Clostridium botulinum (strain Loch Maree / Type A3).